The sequence spans 279 residues: MIALFPNESKDPSLKIAAEICQFLISRNIEITAEDKHAKQLNVFPLSQVNVQHINFRISLGGDGTILRLIHKHPTIHAPLLGINLGSLGFLADIPLDGIFPSLEDLIKGRYRVQKRMMVEGSVLCKPSCFAVNEVVIHRAQNPCLIDLAIYVDGNYLNTFSADGMIISTPSGSTAYSLAAGGPILTPELKAFVLTPICPHTISNRPIVLMPEISIQVKYLSSYAPVEVSSDGISSFSLSTNEIFHASISSQTFDLVCLERHDYFATLREKLGWQGKLKI.

Catalysis depends on aspartate 63, which acts as the Proton acceptor. NAD(+) contacts are provided by residues 63–64 (DG), arginine 68, 133–134 (NE), and aspartate 163.

This sequence belongs to the NAD kinase family. The cofactor is a divalent metal cation.

Its subcellular location is the cytoplasm. It carries out the reaction NAD(+) + ATP = ADP + NADP(+) + H(+). Involved in the regulation of the intracellular balance of NAD and NADP, and is a key enzyme in the biosynthesis of NADP. Catalyzes specifically the phosphorylation on 2'-hydroxyl of the adenosine moiety of NAD to yield NADP. The chain is NAD kinase from Protochlamydia amoebophila (strain UWE25).